Here is a 199-residue protein sequence, read N- to C-terminus: NAD(P)H dehydrogenase (quinone) (199 aa).

The Flavodoxin-like domain occupies 4-190 (ILVLYYSTYG…DGARFQGRHV (187 aa)). FMN is bound by residues 10–15 (STYGHI) and 78–80 (TRF). Y12 serves as a coordination point for NAD(+). W98 lines the substrate pocket. Residues 113 to 119 (STATQHG) and H134 contribute to the FMN site.

The protein belongs to the WrbA family. It depends on FMN as a cofactor.

It carries out the reaction a quinone + NADH + H(+) = a quinol + NAD(+). The enzyme catalyses a quinone + NADPH + H(+) = a quinol + NADP(+). The chain is NAD(P)H dehydrogenase (quinone) from Rhizorhabdus wittichii (strain DSM 6014 / CCUG 31198 / JCM 15750 / NBRC 105917 / EY 4224 / RW1) (Sphingomonas wittichii).